The following is a 151-amino-acid chain: Desiccation-related protein PCC27-45 (151 aa).

Belongs to the LEA type 2 family.

The protein is Desiccation-related protein PCC27-45 of Craterostigma plantagineum (Blue gem).